The chain runs to 331 residues: Major ferric iron-binding protein (331 aa).

Residues 1–22 (MKTSIRYALLAAALTAATPALA) form the signal peptide. Positions 31, 79, 217, and 218 each coordinate Fe cation.

It belongs to the bacterial solute-binding protein 1 family.

It is found in the periplasm. This protein may be a central component in the iron-acquisition system. This is Major ferric iron-binding protein (fbpA) from Neisseria meningitidis serogroup B (strain ATCC BAA-335 / MC58).